The sequence spans 388 residues: Processive diacylglycerol beta-glucosyltransferase (388 aa).

Belongs to the glycosyltransferase 28 family. UgtP subfamily.

The protein resides in the cell membrane. The catalysed reaction is a 1,2-diacyl-3-O-(beta-D-glucopyranosyl)-sn-glycerol + UDP-alpha-D-glucose = a 1,2-diacyl-3-O-(beta-D-Glc-(1-&gt;6)-beta-D-Glc)-sn-glycerol + UDP + H(+). It carries out the reaction a 1,2-diacyl-3-O-(beta-D-Glc-(1-&gt;6)-beta-D-Glc)-sn-glycerol + UDP-alpha-D-glucose = a 1,2-diacyl-3-O-(beta-D-Glc-(1-&gt;6)-beta-D-Glc-(1-&gt;6)-beta-D-Glc)-sn-glycerol + UDP + H(+). The enzyme catalyses a 1,2-diacyl-sn-glycerol + UDP-alpha-D-glucose = a 1,2-diacyl-3-O-(beta-D-glucopyranosyl)-sn-glycerol + UDP + H(+). It participates in glycolipid metabolism; diglucosyl-diacylglycerol biosynthesis. Functionally, processive glucosyltransferase involved in the biosynthesis of both the bilayer- and non-bilayer-forming membrane glucolipids. Is able to successively transfer up to three glucosyl residues to diacylglycerol (DAG), thereby catalyzing the formation of beta-monoglucosyl-DAG (3-O-(beta-D-glucopyranosyl)-1,2-diacyl-sn-glycerol), beta-diglucosyl-DAG (3-O-(beta-D-glucopyranosyl-beta-(1-&gt;6)-D-glucopyranosyl)-1,2-diacyl-sn-glycerol) and beta-triglucosyl-DAG (3-O-(beta-D-glucopyranosyl-beta-(1-&gt;6)-D-glucopyranosyl-beta-(1-&gt;6)-D-glucopyranosyl)-1,2-diacyl-sn-glycerol). Beta-diglucosyl-DAG is the predominant glycolipid found in Bacillales and is also used as a membrane anchor for lipoteichoic acid (LTA). This is Processive diacylglycerol beta-glucosyltransferase from Bacillus cereus (strain AH187).